A 636-amino-acid polypeptide reads, in one-letter code: PTS system beta-glucoside-specific EIIBCA component (636 aa).

In terms of domain architecture, PTS EIIB type-1 spans 1–86 (MKYEQLAKDI…VEIGGFQNQA (86 aa)). The Phosphocysteine intermediate; for EIIB activity role is filled by Cys26. 10 helical membrane passes run 104–124 (IDII…TGMI), 146–166 (LLHA…GYTA), 172–192 (ATPF…LVVL), 215–235 (FLGI…IILA), 258–278 (LVPF…IGPI), 299–319 (IIAG…GLHW), 337–357 (VLAM…AVWL), 369–389 (VPAF…GVTL), 407–427 (AIIG…IFGI), and 444–464 (IVIA…LFGL). In terms of domain architecture, PTS EIIC type-1 spans 105 to 476 (DIIASIFTPV…GNASDEQTET (372 aa)). Residues 472-492 (EQTETKAHTSTGTGEKEEISS) are disordered. One can recognise a PTS EIIA type-1 domain in the interval 506–610 (DEAFSSGALG…AVTTPVIVTN (105 aa)). Catalysis depends on His558, which acts as the Tele-phosphohistidine intermediate; for EIIA activity.

The protein localises to the cell membrane. Functionally, the phosphoenolpyruvate-dependent sugar phosphotransferase system (sugar PTS), a major carbohydrate active -transport system, catalyzes the phosphorylation of incoming sugar substrates concomitantly with their translocation across the cell membrane. This system is involved in beta-glucoside transport. In Halalkalibacterium halodurans (strain ATCC BAA-125 / DSM 18197 / FERM 7344 / JCM 9153 / C-125) (Bacillus halodurans), this protein is PTS system beta-glucoside-specific EIIBCA component (bglP).